We begin with the raw amino-acid sequence, 138 residues long: Putative pre-16S rRNA nuclease (138 aa).

It belongs to the YqgF nuclease family.

It is found in the cytoplasm. In terms of biological role, could be a nuclease involved in processing of the 5'-end of pre-16S rRNA. The protein is Putative pre-16S rRNA nuclease of Enterobacter sp. (strain 638).